Consider the following 73-residue polypeptide: MAKTITISEEAYRLLLSEKREGESFSDVIIRLVKSSRKNIMDYAGIWGDMNDEEVNKLFEDLKKMWERWNVNA.

Belongs to the UPF0330 family.

Its function is as follows. Possibly the antitoxin component of a type II toxin-antitoxin (TA) system. Its cognate toxin is VapC21 (Potential). The polypeptide is Putative antitoxin VapB21 (vapB21) (Sulfurisphaera tokodaii (strain DSM 16993 / JCM 10545 / NBRC 100140 / 7) (Sulfolobus tokodaii)).